The chain runs to 2382 residues: Serine/threonine-protein kinase WNK1 (2382 aa).

2 disordered regions span residues 1 to 81 (MSGG…RFFR) and 95 to 203 (LPGL…QQDD). A phosphoserine mark is found at Ser-15 and Ser-19. The span at 50–66 (RTEEYRRRRHTMDKDSR) shows a compositional bias: basic and acidic residues. At Thr-60 the chain carries Phosphothreonine. Low complexity-rich tracts occupy residues 95-108 (LPGL…PSIP) and 125-153 (VTAT…GPAP). 2 positions are modified to phosphoserine: Ser-167 and Ser-174. In terms of domain architecture, Protein kinase spans 221–479 (LKFDIEIGRG…IKDLLNHAFF (259 aa)). Position 231 (Ser-231) interacts with ATP. Chloride is bound by residues Phe-283 and Leu-299. ATP contacts are provided by residues 301-304 (TELM) and Lys-351. Catalysis depends on Asp-368, which acts as the Proton acceptor. Residues Leu-369 and Leu-371 each coordinate chloride. Residues Ser-378 and Ser-382 each carry the phosphoserine; by autocatalysis modification. The tract at residues 488-555 (ELAEEDDGEK…VCEGDHKTMA (68 aa)) is autoinhibitory domain. Residues 573-588 (QLVREEQEKKKQEESS) are compositionally biased toward basic and acidic residues. Disordered stretches follow at residues 573-779 (QLVR…QPQA), 1018-1041 (QPGG…STQG), and 1053-1119 (VAQT…SRPK). Polar residues predominate over residues 598–614 (ASQTGIKQLPSASTGIP). Residues 615–625 (TASTTSASVST) are compositionally biased toward low complexity. Positions 628 to 638 (EPEEPEADQHQ) are interaction with KLHL3. Residues 637 to 689 (HQQLQYQQPSISVLSDGTVDSGQGSSVFTESRVSSQQTVSYGSQHEQAHSTGT) are compositionally biased toward polar residues. A compositionally biased stretch (low complexity) spans 709–779 (PPSSVAQGQS…TAQPVSQPQA (71 aa)). Positions 1025–1041 (QAPTTSSQQAVLESTQG) are enriched in polar residues. The span at 1053 to 1077 (VAQTQATQPTTLASSVDSAHSDVAS) shows a compositional bias: low complexity. Over residues 1080–1090 (SDGNENVPSSS) the composition is skewed to polar residues. The segment covering 1098 to 1119 (TKRHYRKSVRSRSRHEKTSRPK) has biased composition (basic residues). The RFXV motif 1 signature appears at 1257–1260 (RFIV). Ser-1261 bears the Phosphoserine mark. Low complexity-rich tracts occupy residues 1457–1467 (SASAGGSTATP) and 1733–1745 (QVST…TSGV). Disordered regions lie at residues 1457–1476 (SASA…AVVS) and 1733–1790 (QVST…TQSQ). Thr-1848 bears the Phosphothreonine mark. The RFXV motif 2 motif lies at 1859 to 1862 (RFQV). The tract at residues 1866–1948 (ADGAQKEGKN…QPTKVGRFQV (83 aa)) is disordered. Residues 1869-1884 (AQKEGKNKSEDAKSVH) show a composition bias toward basic and acidic residues. The span at 1887 to 1905 (SSTSESSVLSSSSPESTLV) shows a compositional bias: low complexity. The segment covering 1927-1940 (KTTASEAKSDTGQP) has biased composition (polar residues). 2 consecutive short sequence motifs (RFXV motif) follow at residues 1945-1948 (RFQV) and 1957-1960 (RFSV). Residues Ser-1978, Ser-2002, Ser-2011, Ser-2012, Ser-2027, Ser-2029, and Ser-2032 each carry the phosphoserine modification. The span at 1994 to 2003 (PKKEKPELSE) shows a compositional bias: basic and acidic residues. Disordered stretches follow at residues 1994–2069 (PKKE…DIED) and 2101–2196 (LYTK…NLYS). The segment covering 2035–2062 (QLSSKSLPSQNLSQSLSNSFNSSYMSSD) has biased composition (low complexity). Phosphoserine is present on Ser-2121. The segment covering 2122–2134 (GRRRRPTKSKGSK) has biased composition (basic residues). Over residues 2135–2145 (SSRSSSLGNKS) the composition is skewed to low complexity. Composition is skewed to polar residues over residues 2146-2167 (PQLS…QQTL) and 2175-2196 (ESGQ…NLYS). The interval 2241–2261 (SRKGTFTDDLHKLVDNWARDA) is amphipathic alpha-helix. Ser-2270 and Ser-2286 each carry phosphoserine. The segment at 2332-2352 (PFGAQWSGTGGPAPQPLGQFQ) is disordered. Phosphoserine occurs at positions 2370 and 2372.

It belongs to the protein kinase superfamily. Ser/Thr protein kinase family. WNK subfamily. As to quaternary structure, interacts with WNK3. Interacts with WNK4; inhibiting the activity of WNK4. Interacts with SGK1; promoting its activation. Associates with the mTORC2 complex. Interacts with UVRAG. Interacts (via amphipathic alpha-helix region) with EMC2; promoting the ER membrane protein complex assembly. In terms of assembly, interacts with isoform 1; inhibiting isoform 1 activity. Requires Mg(2+) as cofactor. Autophosphorylated at Ser-378 and Ser-382, promoting its activity. Autophosphorylation at Ser-382 is inhibited by intracellular calcium. Phosphorylation at Thr-60 increases ability to activate SGK1. Post-translationally, ubiquitinated by the BCR(KLHL3) complex, leading to its degradation. Also ubiquitinated by the BCR(KLHL2) complex. In terms of processing, may be O-glycosylated. As to expression, widely expressed, with highest levels observed in the testis, heart, kidney and skeletal muscle. In terms of tissue distribution, strong expression in dorsal root ganglia and spinal cord. This isoform is kidney-specific and specifically expressed in the distal convoluted tubule (DCT) and connecting tubule (CNT) of the nephron.

Its subcellular location is the cytoplasm. It is found in the nucleus. It localises to the cytoskeleton. The protein localises to the spindle. The catalysed reaction is L-seryl-[protein] + ATP = O-phospho-L-seryl-[protein] + ADP + H(+). It carries out the reaction L-threonyl-[protein] + ATP = O-phospho-L-threonyl-[protein] + ADP + H(+). Its activity is regulated as follows. Activated in response to hyperosmotic stress: cell shrinkage promotes formation of a membraneless compartment that concentrates WNK1 with its substrates, OXSR1/OSR1 and STK39/SPAK. Activation requires autophosphorylation of Ser-382 and, to a lower extent, Ser-378. Autophosphorylation and subsequent activation is inhibited by increases in intracellular ionic strength: Cl(-) potently inhibits WNK1 kinase activity via direct binding. Also inhibited by K(+) ions. Inhibited by small compounds staurosporine, tyrphostin 47, as well as Src tyrosine kinase inhibitors PP1 and PP2. Functionally, serine/threonine-protein kinase component of the WNK1-SPAK/OSR1 kinase cascade, which acts as a key regulator of blood pressure and regulatory volume increase by promoting ion influx. WNK1 mediates regulatory volume increase in response to hyperosmotic stress by acting as a molecular crowding sensor, which senses cell shrinkage and mediates formation of a membraneless compartment by undergoing liquid-liquid phase separation. The membraneless compartment concentrates WNK1 with its substrates, OXSR1/OSR1 and STK39/SPAK, promoting WNK1-dependent phosphorylation and activation of downstream kinases OXSR1/OSR1 and STK39/SPAK. Following activation, OXSR1/OSR1 and STK39/SPAK catalyze phosphorylation of ion cotransporters SLC12A1/NKCC2, SLC12A2/NKCC1, SLC12A5/KCC2 and SLC12A6/KCC3, regulating their activity. Phosphorylation of Na-K-Cl cotransporters SLC12A2/NKCC1 and SLC12A2/NKCC1 promote their activation and ion influx; simultaneously, phosphorylation of K-Cl cotransporters SLC12A5/KCC2 and SLC12A6/KCC3 inhibit their activity, blocking ion efflux. Also acts as a regulator of angiogenesis in endothelial cells via activation of OXSR1/OSR1 and STK39/SPAK: activation of OXSR1/OSR1 regulates chemotaxis and invasion, while STK39/SPAK regulates endothelial cell proliferation. Also acts independently of the WNK1-SPAK/OSR1 kinase cascade by catalyzing phosphorylation of other substrates, such as SYT2, PCF11 and NEDD4L. Mediates phosphorylation of SYT2, regulating SYT2 association with phospholipids and membrane-binding. Regulates mRNA export in the nucleus by mediating phosphorylation of PCF11, thereby decreasing the association between PCF11 and POLR2A/RNA polymerase II and promoting mRNA export to the cytoplasm. Acts as a negative regulator of autophagy. Required for the abscission step during mitosis, independently of the WNK1-SPAK/OSR1 kinase cascade. May also play a role in actin cytoskeletal reorganization. Also acts as a scaffold protein independently of its protein kinase activity: negatively regulates cell membrane localization of various transporters and channels, such as SLC4A4, SLC26A6, SLC26A9, TRPV4 and CFTR. Involved in the regulation of epithelial Na(+) channel (ENaC) by promoting activation of SGK1 in a kinase-independent manner: probably acts as a scaffold protein that promotes the recruitment of SGK1 to the mTORC2 complex in response to chloride, leading to mTORC2-dependent phosphorylation and activation of SGK1. Acts as an assembly factor for the ER membrane protein complex independently of its protein kinase activity: associates with EMC2 in the cytoplasm via its amphipathic alpha-helix, and prevents EMC2 ubiquitination and subsequent degradation, thereby promoting EMC2 stabilization. Its function is as follows. Kinase-defective isoform specifically expressed in kidney, which acts as a dominant-negative regulator of the longer isoform 1. Does not directly inhibit WNK4 and has no direct effect on sodium and chloride ion transport. Down-regulates sodium-chloride cotransporter activity indirectly by inhibiting isoform 1, it associates with isoform 1 and attenuates its kinase activity. In kidney, may play an important role regulating sodium and potassium balance. The polypeptide is Serine/threonine-protein kinase WNK1 (Homo sapiens (Human)).